The following is a 172-amino-acid chain: SsrA-binding protein (172 aa).

It belongs to the SmpB family.

The protein resides in the cytoplasm. Functionally, required for rescue of stalled ribosomes mediated by trans-translation. Binds to transfer-messenger RNA (tmRNA), required for stable association of tmRNA with ribosomes. tmRNA and SmpB together mimic tRNA shape, replacing the anticodon stem-loop with SmpB. tmRNA is encoded by the ssrA gene; the 2 termini fold to resemble tRNA(Ala) and it encodes a 'tag peptide', a short internal open reading frame. During trans-translation Ala-aminoacylated tmRNA acts like a tRNA, entering the A-site of stalled ribosomes, displacing the stalled mRNA. The ribosome then switches to translate the ORF on the tmRNA; the nascent peptide is terminated with the 'tag peptide' encoded by the tmRNA and targeted for degradation. The ribosome is freed to recommence translation, which seems to be the essential function of trans-translation. The polypeptide is SsrA-binding protein (Dehalococcoides mccartyi (strain CBDB1)).